A 322-amino-acid chain; its full sequence is D-alanine--D-alanine ligase (322 aa).

The 204-residue stretch at 108 to 311 (KEFYYNAELP…FPSLLDTLIE (204 aa)) folds into the ATP-grasp domain. 136 to 192 (IEDLGLPLVVKPACAGSSIGISLAHTEEELLAGINHARDCSAGAIMVEQFIKGRELT) serves as a coordination point for ATP. Mg(2+)-binding residues include aspartate 265, glutamate 278, and asparagine 280.

The protein belongs to the D-alanine--D-alanine ligase family. The cofactor is Mg(2+). Mn(2+) serves as cofactor.

It localises to the cytoplasm. The enzyme catalyses 2 D-alanine + ATP = D-alanyl-D-alanine + ADP + phosphate + H(+). The protein operates within cell wall biogenesis; peptidoglycan biosynthesis. Its function is as follows. Cell wall formation. In Desulfotalea psychrophila (strain LSv54 / DSM 12343), this protein is D-alanine--D-alanine ligase.